The primary structure comprises 543 residues: Biotinidase (543 aa).

A signal peptide spans 1 to 41; that stretch reads MAHAHIQGGRRAKSRFVVCIMSGARSKLALFLCGCYVVALG. Residues 72 to 351 form the CN hydrolase domain; the sequence is NPLALISRQE…VGLIGAENAT (280 aa). E112 acts as the Proton acceptor in catalysis. An N-linked (GlcNAc...) asparagine glycan is attached at N119. N150 carries an N-linked (GlcNAc...) (complex) asparagine glycan. N-linked (GlcNAc...) asparagine glycosylation is present at N203. K212 acts as the Proton donor in catalysis. The Nucleophile role is filled by C245. N-linked (GlcNAc...) asparagine glycans are attached at residues N349, N402, and N489.

This sequence belongs to the carbon-nitrogen hydrolase superfamily. BTD/VNN family.

It is found in the secreted. The protein localises to the extracellular space. The enzyme catalyses biocytin + H2O = biotin + L-lysine. The catalysed reaction is biotin amide + H2O = biotin + NH4(+). Catalytic release of biotin from biocytin, the product of biotin-dependent carboxylases degradation. This is Biotinidase from Homo sapiens (Human).